We begin with the raw amino-acid sequence, 278 residues long: Proline-rich 28 kDa antigen homolog (278 aa).

Positions 1-28 (MIQSTQTWRVLAGGLAATAMGVTVFAGG) are cleaved as a signal peptide.

It to M.tuberculosis Rv0040c.

This chain is Proline-rich 28 kDa antigen homolog, found in Mycobacterium leprae (strain TN).